The following is a 434-amino-acid chain: Adenylosuccinate synthetase (434 aa).

Residues 15–21 and 43–45 each bind GTP; these read GDEGKGK and GHT. The active-site Proton acceptor is the Asp16. Asp16 and Gly43 together coordinate Mg(2+). IMP contacts are provided by residues 16-19, 41-44, Thr133, Arg147, Gln228, Thr243, and Arg307; these read DEGK and NAGH. The Proton donor role is filled by His44. 303 to 309 serves as a coordination point for substrate; sequence SVTGRAR. GTP-binding positions include Arg309, 335–337, and 418–420; these read KLD and STG.

Belongs to the adenylosuccinate synthetase family. In terms of assembly, homodimer. Mg(2+) is required as a cofactor.

It is found in the cytoplasm. It catalyses the reaction IMP + L-aspartate + GTP = N(6)-(1,2-dicarboxyethyl)-AMP + GDP + phosphate + 2 H(+). It functions in the pathway purine metabolism; AMP biosynthesis via de novo pathway; AMP from IMP: step 1/2. Plays an important role in the de novo pathway of purine nucleotide biosynthesis. Catalyzes the first committed step in the biosynthesis of AMP from IMP. The protein is Adenylosuccinate synthetase of Neisseria gonorrhoeae (strain NCCP11945).